We begin with the raw amino-acid sequence, 232 residues long: Rho-related GTP-binding protein Rho6 (232 aa).

Residues 23-28 (QCGKTA), 38-45 (YPETYVPT), 67-71 (DTSGS), 125-128 (CKTD), and 169-170 (AF) contribute to the GTP site. The short motif at 42 to 50 (YVPTVFENY) is the Effector region element. C229 bears the Cysteine methyl ester mark. C229 carries the S-geranylgeranyl cysteine lipid modification. Positions 230-232 (SIM) are cleaved as a propeptide — removed in mature form.

The protein belongs to the small GTPase superfamily. Rho family. Binds GRB7 and PLXNB1. Interacts with PLXNA2. Interacts with UBXD5.

The protein localises to the cell membrane. The protein resides in the cytoplasm. It is found in the cytoskeleton. Lacks intrinsic GTPase activity. Has a low affinity for GDP, and constitutively binds GTP. Controls rearrangements of the actin cytoskeleton. Induces the Rac-dependent neuritic process formation in part by disruption of the cortical actin filaments. Causes the formation of many neuritic processes from the cell body with disruption of the cortical actin filaments. In Bos taurus (Bovine), this protein is Rho-related GTP-binding protein Rho6 (RND1).